Here is a 601-residue protein sequence, read N- to C-terminus: NADH-quinone oxidoreductase subunit C/D (601 aa).

Positions 1-191 are NADH dehydrogenase I subunit C; that stretch reads MKLTRDFPHN…DPFMLDAAKQ (191 aa). The interval 215-601 is NADH dehydrogenase I subunit D; it reads DYMFLNLGPN…IDFVMSDVDR (387 aa).

It in the N-terminal section; belongs to the complex I 30 kDa subunit family. In the C-terminal section; belongs to the complex I 49 kDa subunit family. In terms of assembly, NDH-1 is composed of 13 different subunits. Subunits NuoB, CD, E, F, and G constitute the peripheral sector of the complex.

Its subcellular location is the cell inner membrane. The catalysed reaction is a quinone + NADH + 5 H(+)(in) = a quinol + NAD(+) + 4 H(+)(out). Functionally, NDH-1 shuttles electrons from NADH, via FMN and iron-sulfur (Fe-S) centers, to quinones in the respiratory chain. The immediate electron acceptor for the enzyme in this species is believed to be ubiquinone. Couples the redox reaction to proton translocation (for every two electrons transferred, four hydrogen ions are translocated across the cytoplasmic membrane), and thus conserves the redox energy in a proton gradient. The chain is NADH-quinone oxidoreductase subunit C/D from Shewanella oneidensis (strain ATCC 700550 / JCM 31522 / CIP 106686 / LMG 19005 / NCIMB 14063 / MR-1).